The primary structure comprises 465 residues: Neuromedin-K receptor (465 aa).

Over 1 to 84 the chain is Extracellular; it reads MATLPAAETW…TNQFVQPSWR (84 aa). N23, N50, and N73 each carry an N-linked (GlcNAc...) asparagine glycan. Residues 85 to 107 traverse the membrane as a helical segment; that stretch reads IALWSLAYGVVVAVAVLGNLIVI. The Cytoplasmic segment spans residues 108–117; it reads WIILAHKRMR. Residues 118 to 139 form a helical membrane-spanning segment; sequence TVTNYFLVNLAFSDASMAAFNT. Topologically, residues 140-159 are extracellular; sequence LVNFIYALHSEWYFGANYCR. The cysteines at positions 158 and 233 are disulfide-linked. Residues 160 to 181 traverse the membrane as a helical segment; that stretch reads FQNFFPITAVFASIYSMTAIAV. Over 182 to 201 the chain is Cytoplasmic; sequence DRYMAIIDPLKPRLSATATK. A helical transmembrane segment spans residues 202 to 222; it reads IVIGSIWILAFLLAFPQCLYS. Residues 223–245 are Extracellular-facing; the sequence is KTKVMPGRTLCFVQWPEGPKQHF. A helical membrane pass occupies residues 246 to 270; the sequence is TYHIIVIILVYCFPLLIMGITYTIV. Topologically, residues 271–299 are cytoplasmic; it reads GITLWGGEIPGDTCDKYHEQLKAKRKVVK. Residues 300 to 321 traverse the membrane as a helical segment; sequence MMIIVVMTFAICWLPYHIYFIL. Residues 322–334 lie on the Extracellular side of the membrane; sequence TAIYQQLNRWKYI. A helical membrane pass occupies residues 335–359; it reads QQVYLASFWLAMSSTMYNPIIYCCL. The Cytoplasmic segment spans residues 360-465; it reads NKRFRAGFKR…SPYTSVDEYS (106 aa). C374 is lipidated: S-palmitoyl cysteine. The tract at residues 415-465 is disordered; that stretch reads PNDADTTRSSRKKRATPRDPSFNGCSRRNSKSASATSSFISSPYTSVDEYS. The span at 445-465 shows a compositional bias: low complexity; that stretch reads KSASATSSFISSPYTSVDEYS.

It belongs to the G-protein coupled receptor 1 family. In terms of processing, the anchoring of this receptor to the plasma membrane is probably mediated by the palmitoylation of a cysteine residue.

The protein localises to the cell membrane. Functionally, this is a receptor for the tachykinin neuropeptide neuromedin-K (neurokinin B). It is associated with G proteins that activate a phosphatidylinositol-calcium second messenger system. The rank order of affinity of this receptor to tachykinins is: neuromedin-K &gt; substance K &gt; substance P. The protein is Neuromedin-K receptor (TACR3) of Homo sapiens (Human).